The following is a 622-amino-acid chain: Cytochrome c oxidase subunit 1 (622 aa).

Topologically, residues 1 to 27 are extracellular; that stretch reads MLNALTEKRTRGSMLWDYLTTVDHKKI. Residues 28 to 46 form a helical membrane-spanning segment; it reads AILYLVAGGFFFLVGGIEA. The Cytoplasmic portion of the chain corresponds to 47 to 68; the sequence is MFIRIQLAKPENAFLSAQAYNE. The helical transmembrane segment at 69–88 threads the bilayer; sequence VMTMHGTTMIFLAAMPLLFA. A Fe(II)-heme a-binding site is contributed by His-73. Over 89 to 110 the chain is Extracellular; the sequence is LMNAVVPLQIGARDVSFPFLNA. Residues 111–128 traverse the membrane as a helical segment; the sequence is LGFWLFFFGGIFLNLSWF. Over 129 to 159 the chain is Cytoplasmic; that stretch reads LGGAPDAGWTSYASLSLHSKGHGIDFFVLGL. Residues 160-178 traverse the membrane as a helical segment; that stretch reads QISGLGTLIAGINFLATII. The Extracellular segment spans residues 179 to 196; the sequence is NMRAPGMTYMRLPLFTWT. Residues 197–215 form a helical membrane-spanning segment; sequence TFVASALILFAFPPLTVGL. Topologically, residues 216–241 are cytoplasmic; the sequence is ALMMLDRLFGTNFFNPELGGNTVIWE. A helical transmembrane segment spans residues 242 to 261; it reads HLFWIFGHPEVYILILPAFG. Cu cation contacts are provided by His-249 and Tyr-253. Positions 249-253 form a cross-link, 1'-histidyl-3'-tyrosine (His-Tyr); sequence HPEVY. Over 262–284 the chain is Extracellular; sequence IFSEVIPVFARKRLFGYSSMVFA. The chain crosses the membrane as a helical span at residues 285–304; the sequence is IVLIGFLGFMVWVHHMFTTG. Residues His-298 and His-299 each contribute to the Cu cation site. Over 305–312 the chain is Cytoplasmic; that stretch reads LGPIANAI. The helical transmembrane segment at 313–331 threads the bilayer; that stretch reads FAVATMAIAIPTGIKIFNW. The Extracellular portion of the chain corresponds to 332–346; sequence LLTIWGGNVKYTTAM. The chain crosses the membrane as a helical span at residues 347 to 366; the sequence is LYAVSFIPSFVLGGVTGVML. The Cytoplasmic portion of the chain corresponds to 367 to 374; the sequence is AAAAADYQ. A helical transmembrane segment spans residues 375 to 394; it reads FHDTYFVVAHFHYVIIGGVV. His-384 lines the heme a3 pocket. His-386 serves as a coordination point for Fe(II)-heme a. Residues 395–421 lie on the Extracellular side of the membrane; that stretch reads FGLLAGVHFWWPKMFGKILHETMGKIS. A helical transmembrane segment spans residues 422 to 441; it reads FVLFFIGFHLTFFIQHFVGL. Over 442–459 the chain is Cytoplasmic; it reads MGMPRRVYTFLPGQGLET. Residues 460–479 form a helical membrane-spanning segment; the sequence is GNLISTIGAFFMAAAVILLL. Over 480–552 the chain is Extracellular; the sequence is VNVIWTSVKG…EPVDDIHMPN (73 aa). A helical transmembrane segment spans residues 553-572; that stretch reads GSILPLIISFGLFVAAFGLL. The Cytoplasmic segment spans residues 573–580; the sequence is YRSDYAWG. A helical transmembrane segment spans residues 581-604; it reads LPVIFIGLGITFITMLLRSVIDDH. Over 605–622 the chain is Cytoplasmic; that stretch reads GYHIHKEELPNDDKGVKA.

This sequence belongs to the heme-copper respiratory oxidase family. Requires Cu(2+) as cofactor. The cofactor is heme.

The protein localises to the cell membrane. It catalyses the reaction 4 Fe(II)-[cytochrome c] + O2 + 8 H(+)(in) = 4 Fe(III)-[cytochrome c] + 2 H2O + 4 H(+)(out). The protein operates within energy metabolism; oxidative phosphorylation. Functionally, cytochrome c oxidase is the component of the respiratory chain that catalyzes the reduction of oxygen to water. Subunits 1-3 form the functional core of the enzyme complex. Co I is the catalytic subunit of the enzyme. Electrons originating in cytochrome c are transferred via the copper A center of subunit 2 and heme a of subunit 1 to the bimetallic center formed by heme a3 and copper B. This cytochrome c oxidase shows proton pump activity across the membrane in addition to the electron transfer. This chain is Cytochrome c oxidase subunit 1 (ctaD), found in Bacillus subtilis (strain 168).